The primary structure comprises 338 residues: Ketol-acid reductoisomerase (NADP(+)) (338 aa).

The KARI N-terminal Rossmann domain occupies 1-181 (MKVFYDKDCD…GGGKAGIIET (181 aa)). NADP(+) contacts are provided by residues 24–27 (YGSQ), Arg47, and Ser52. The active site involves His107. Gly133 is an NADP(+) binding site. The KARI C-terminal knotted domain maps to 182–327 (TFREETETDL…EKLRAMMPWI (146 aa)). 4 residues coordinate Mg(2+): Asp190, Glu194, Glu226, and Glu230. Residue Ser251 participates in substrate binding.

This sequence belongs to the ketol-acid reductoisomerase family. The cofactor is Mg(2+).

It catalyses the reaction (2R)-2,3-dihydroxy-3-methylbutanoate + NADP(+) = (2S)-2-acetolactate + NADPH + H(+). It carries out the reaction (2R,3R)-2,3-dihydroxy-3-methylpentanoate + NADP(+) = (S)-2-ethyl-2-hydroxy-3-oxobutanoate + NADPH + H(+). It functions in the pathway amino-acid biosynthesis; L-isoleucine biosynthesis; L-isoleucine from 2-oxobutanoate: step 2/4. Its pathway is amino-acid biosynthesis; L-valine biosynthesis; L-valine from pyruvate: step 2/4. In terms of biological role, involved in the biosynthesis of branched-chain amino acids (BCAA). Catalyzes an alkyl-migration followed by a ketol-acid reduction of (S)-2-acetolactate (S2AL) to yield (R)-2,3-dihydroxy-isovalerate. In the isomerase reaction, S2AL is rearranged via a Mg-dependent methyl migration to produce 3-hydroxy-3-methyl-2-ketobutyrate (HMKB). In the reductase reaction, this 2-ketoacid undergoes a metal-dependent reduction by NADPH to yield (R)-2,3-dihydroxy-isovalerate. This is Ketol-acid reductoisomerase (NADP(+)) from Albidiferax ferrireducens (strain ATCC BAA-621 / DSM 15236 / T118) (Rhodoferax ferrireducens).